A 213-amino-acid chain; its full sequence is Nucleoside triphosphate pyrophosphatase (213 aa).

Catalysis depends on Asp79, which acts as the Proton acceptor.

The protein belongs to the Maf family. A divalent metal cation serves as cofactor.

The protein resides in the cytoplasm. The catalysed reaction is a ribonucleoside 5'-triphosphate + H2O = a ribonucleoside 5'-phosphate + diphosphate + H(+). It catalyses the reaction a 2'-deoxyribonucleoside 5'-triphosphate + H2O = a 2'-deoxyribonucleoside 5'-phosphate + diphosphate + H(+). Functionally, nucleoside triphosphate pyrophosphatase. May have a dual role in cell division arrest and in preventing the incorporation of modified nucleotides into cellular nucleic acids. The chain is Nucleoside triphosphate pyrophosphatase from Mycobacterium leprae (strain Br4923).